The primary structure comprises 489 residues: MAAAEPMGPAQVPMNSEVIVDPIQGQVNFEDVFVYFSQEEWVLLDEAQRLLYRDVMLENFALMASLGHTSFMSHIVASLVMGSEPWVPDWVDMTLAVATETPGGSDPGCWHGMEDEEIPFEQSFSIGMSQIRIPKGGPSTQKAYPCGTCGLVLKDILHLAEHQETHPGQKPYMCVLCGKQFCFSANLHQHQKQHSGEKPFRSDKSRPFLLNNCAVQSMEMSFVTGEACKDFLASSSIFEHHAPHNEWKPHSNTKCEEASHCGKRHYKCSECGKTFSRKDSLVQHQRVHTGERPYECGECGKTFSRKPILAQHQRIHTGEMPYECGICGKVFNHSSNLIVHQRVHTGARPYKCSECGKAYSHKSTLVQHESIHTGERPYECSECGKYFGHKYRLIKHWSVHTGARPYECIACGKFFSQSSDLIAHQRVHNGEKPYVCSECGKAFSHKHVLVQHHRIHTGERPYKCSECGKAFRQRASLIRHWKIHTGERP.

Positions 27-98 (VNFEDVFVYF…DWVDMTLAVA (72 aa)) constitute a KRAB domain. 10 C2H2-type zinc fingers span residues 144–166 (YPCGTCGLVLKDILHLAEHQETH), 172–194 (YMCVLCGKQFCFSANLHQHQKQH), 266–288 (YKCSECGKTFSRKDSLVQHQRVH), 294–316 (YECGECGKTFSRKPILAQHQRIH), 322–344 (YECGICGKVFNHSSNLIVHQRVH), 350–372 (YKCSECGKAYSHKSTLVQHESIH), 378–400 (YECSECGKYFGHKYRLIKHWSVH), 406–428 (YECIACGKFFSQSSDLIAHQRVH), 434–456 (YVCSECGKAFSHKHVLVQHHRIH), and 462–484 (YKCSECGKAFRQRASLIRHWKIH).

The protein belongs to the krueppel C2H2-type zinc-finger protein family.

The protein resides in the nucleus. Its function is as follows. May be involved in transcriptional regulation. This is Zinc finger protein 772 (ZNF772) from Homo sapiens (Human).